The sequence spans 548 residues: Esterase-5A (548 aa).

Positions 1–21 are cleaved as a signal peptide; sequence MHLVRWLICLIQLWVQLGAAG. Cysteine 87 and cysteine 106 are oxidised to a cystine. Asparagine 95 and asparagine 116 each carry an N-linked (GlcNAc...) asparagine glycan. Serine 210 serves as the catalytic Acyl-ester intermediate. Residues cysteine 262 and cysteine 274 are joined by a disulfide bond. N-linked (GlcNAc...) asparagine glycosylation is present at asparagine 479. A disulfide bond links cysteine 518 and cysteine 539.

The protein belongs to the type-B carboxylesterase/lipase family.

Its subcellular location is the secreted. The catalysed reaction is a carboxylic ester + H2O = an alcohol + a carboxylate + H(+). This Drosophila pseudoobscura pseudoobscura (Fruit fly) protein is Esterase-5A (Est-5A).